The following is a 358-amino-acid chain: Ribosomal RNA-processing protein 8 (358 aa).

Residues 1 to 81 form a disordered region; it reads MKPFEVPPWE…PQDSSDDDYE (81 aa). A compositionally biased stretch (basic residues) spans 30-44; the sequence is AKKKPKKKKPKKKKA. 2 positions are modified to phosphoserine: S75 and S76. S-adenosyl-L-methionine is bound by residues H185, G220, D238, and C267.

This sequence belongs to the methyltransferase superfamily. RRP8 family.

It localises to the nucleus. It is found in the nucleolus. In terms of biological role, probable methyltransferase required to silence rDNA. The protein is Ribosomal RNA-processing protein 8 of Drosophila melanogaster (Fruit fly).